A 284-amino-acid polypeptide reads, in one-letter code: Tropomyosin alpha-3 chain (284 aa).

Met-1 is subject to N-acetylmethionine. A disordered region spans residues 1–40 (MEAIKKKMQMLKLDKENALDRAEQAEAEQKQAEERSKQLE). The stretch at 1–284 (MEAIKKKMQM…DHALNDMTSI (284 aa)) forms a coiled coil. Residues 12–40 (KLDKENALDRAEQAEAEQKQAEERSKQLE) show a composition bias toward basic and acidic residues. A Phosphothreonine modification is found at Thr-53. Phosphoserine is present on residues Ser-61 and Ser-87. Thr-108 and Thr-252 each carry phosphothreonine. Tyr-261 bears the Phosphotyrosine mark. Residue Ser-271 is modified to Phosphoserine. The residue at position 282 (Thr-282) is a Phosphothreonine. Ser-283 is modified (phosphoserine).

This sequence belongs to the tropomyosin family. Homodimer. Heterodimer of an alpha (TPM1, TPM3 or TPM4) and a beta (TPM2) chain. Interacts with TMOD1. Interacts with TNNT1.

It is found in the cytoplasm. The protein resides in the cytoskeleton. Its function is as follows. Binds to actin filaments in muscle and non-muscle cells. Plays a central role, in association with the troponin complex, in the calcium dependent regulation of vertebrate striated muscle contraction. Smooth muscle contraction is regulated by interaction with caldesmon. In non-muscle cells is implicated in stabilizing cytoskeleton actin filaments. The polypeptide is Tropomyosin alpha-3 chain (TPM3) (Sus scrofa (Pig)).